The sequence spans 346 residues: 4-hydroxy-3-methylbut-2-enyl diphosphate reductase (346 aa).

Cysteine 19 contacts [4Fe-4S] cluster. 2 residues coordinate (2E)-4-hydroxy-3-methylbut-2-enyl diphosphate: histidine 48 and histidine 84. Residues histidine 48 and histidine 84 each contribute to the dimethylallyl diphosphate site. Isopentenyl diphosphate-binding residues include histidine 48 and histidine 84. Residue cysteine 106 participates in [4Fe-4S] cluster binding. Residue histidine 134 coordinates (2E)-4-hydroxy-3-methylbut-2-enyl diphosphate. Histidine 134 is a binding site for dimethylallyl diphosphate. Residue histidine 134 coordinates isopentenyl diphosphate. Glutamate 136 functions as the Proton donor in the catalytic mechanism. (2E)-4-hydroxy-3-methylbut-2-enyl diphosphate is bound at residue threonine 175. Cysteine 205 serves as a coordination point for [4Fe-4S] cluster. Residues serine 233, serine 234, asparagine 235, and serine 278 each contribute to the (2E)-4-hydroxy-3-methylbut-2-enyl diphosphate site. Positions 233, 234, 235, and 278 each coordinate dimethylallyl diphosphate. Serine 233, serine 234, asparagine 235, and serine 278 together coordinate isopentenyl diphosphate.

Belongs to the IspH family. [4Fe-4S] cluster is required as a cofactor.

The catalysed reaction is isopentenyl diphosphate + 2 oxidized [2Fe-2S]-[ferredoxin] + H2O = (2E)-4-hydroxy-3-methylbut-2-enyl diphosphate + 2 reduced [2Fe-2S]-[ferredoxin] + 2 H(+). The enzyme catalyses dimethylallyl diphosphate + 2 oxidized [2Fe-2S]-[ferredoxin] + H2O = (2E)-4-hydroxy-3-methylbut-2-enyl diphosphate + 2 reduced [2Fe-2S]-[ferredoxin] + 2 H(+). The protein operates within isoprenoid biosynthesis; dimethylallyl diphosphate biosynthesis; dimethylallyl diphosphate from (2E)-4-hydroxy-3-methylbutenyl diphosphate: step 1/1. Its pathway is isoprenoid biosynthesis; isopentenyl diphosphate biosynthesis via DXP pathway; isopentenyl diphosphate from 1-deoxy-D-xylulose 5-phosphate: step 6/6. In terms of biological role, catalyzes the conversion of 1-hydroxy-2-methyl-2-(E)-butenyl 4-diphosphate (HMBPP) into a mixture of isopentenyl diphosphate (IPP) and dimethylallyl diphosphate (DMAPP). Acts in the terminal step of the DOXP/MEP pathway for isoprenoid precursor biosynthesis. This Brucella melitensis biotype 1 (strain ATCC 23456 / CCUG 17765 / NCTC 10094 / 16M) protein is 4-hydroxy-3-methylbut-2-enyl diphosphate reductase.